We begin with the raw amino-acid sequence, 382 residues long: E3 ubiquitin-protein ligase RNF133 (382 aa).

Residues 65-167 enclose the PA domain; it reads SSILKRVAGV…IKGMEILHLI (103 aa). Residues 190–210 traverse the membrane as a helical segment; that stretch reads YFVSFMIVTTATLAYFTFYHI. The RING-type; atypical zinc finger occupies 256–297; the sequence is CVICFEAYKPNEIVRILTCKHFFHKNCIDPWILAHGTCPMCK. Residues 328-382 form a disordered region; the sequence is TLSPVEEETNYELPPARTSSKVTHVQEHPTSSANAGSQPPEAEETSHPSHGQQVL. Residues 344–364 show a composition bias toward polar residues; the sequence is RTSSKVTHVQEHPTSSANAGS.

Interacts with E3 ligase UBE2J1. In terms of processing, auto-ubiquitinated. As to expression, expression is testis-specific.

Its subcellular location is the endoplasmic reticulum membrane. It carries out the reaction S-ubiquitinyl-[E2 ubiquitin-conjugating enzyme]-L-cysteine + [acceptor protein]-L-lysine = [E2 ubiquitin-conjugating enzyme]-L-cysteine + N(6)-ubiquitinyl-[acceptor protein]-L-lysine.. Its pathway is protein modification; protein ubiquitination. Its function is as follows. Has E3 ubiquitin-protein ligase activity. Plays a role in male fecundity through the interaction with the E2 ubituitin-protein ligase UBE2J1. This chain is E3 ubiquitin-protein ligase RNF133 (Rnf133), found in Mus musculus (Mouse).